The primary structure comprises 341 residues: MNSLVALVLLGQIIGSTLSSQVRGDLECDEKDAKEWTDTGVRYINEHKLHGYKYALNVIKNIVVVPWDGDWVAVFLKLNLLETECHVLDPTPVKNCTVRPQHNHAVEMDCDVKIMFNVDTFKEDVFAKCHSTPDSVENVRRNCPKCPILLPSNNPQVVDSVEYVLNKHNEKLSDHVYEVLEISRGQHKYEPEAYYVEFAIVEVNCTAQELHDDHHHCHPNTAGEDHIGFCRATVFRSHASLEKPKDEQFESDCVILHVKEGHAHSHLIQQHVEKDSISPEHNNTALNFVHPHNDTSTSHESHEHLAEVPVAFVKKELPKDISDRHTTPVKGCPGKVHHFEL.

The first 19 residues, M1–S19, serve as a signal peptide directing secretion. 2 consecutive Cystatin fetuin-A-type domains span residues V22–H130 and R141–V254. Positions R23–D25 match the Cell attachment site motif. Intrachain disulfides connect C28–C332, C85–C96, C110–C129, C143–C146, C205–C217, and C230–C253. N95 carries N-linked (GlcNAc...) asparagine glycosylation. A glycan (N-linked (GlcNAc...) asparagine) is linked at N204. Residues N282 and N293 are each glycosylated (N-linked (GlcNAc...) asparagine).

As to quaternary structure, homodimer. In terms of tissue distribution, expressed by the liver.

The protein localises to the secreted. Its function is as follows. Potent inhibitor of hemorrhagic activity but also proteolytic activities of atrolysin C and jararhagin. Inhibition occurs by formation of a non-covalent complex between BJ46a and the proteinases at their metalloproteinase domains. The sequence is that of Antihemorrhagic factor BJ46a from Bothrops jararaca (Jararaca).